A 104-amino-acid polypeptide reads, in one-letter code: MIKSELVQRIAEHNPHLYQRDVENIVNAILDEIVDALARGDRVELRGFGAFSVKHRPARAGRNPRTGAHVPVDQKTVPFFKTGKEMRERLNRDSGDDAPTSDTA.

Over residues 83–95 (GKEMRERLNRDSG) the composition is skewed to basic and acidic residues. The segment at 83 to 104 (GKEMRERLNRDSGDDAPTSDTA) is disordered.

It belongs to the bacterial histone-like protein family. In terms of assembly, heterodimer of an alpha and a beta chain.

In terms of biological role, this protein is one of the two subunits of integration host factor, a specific DNA-binding protein that functions in genetic recombination as well as in transcriptional and translational control. This chain is Integration host factor subunit beta, found in Rhodopseudomonas palustris (strain ATCC BAA-98 / CGA009).